The primary structure comprises 306 residues: Ornithine carbamoyltransferase (306 aa).

Residues 53–56 (STRT), Gln-80, Arg-104, and 131–134 (HPCQ) each bind carbamoyl phosphate. L-ornithine is bound by residues Asn-162, Asp-220, and 224–225 (SM). Carbamoyl phosphate is bound by residues 260 to 261 (CL) and Arg-288.

This sequence belongs to the aspartate/ornithine carbamoyltransferase superfamily. OTCase family.

It localises to the cytoplasm. The enzyme catalyses carbamoyl phosphate + L-ornithine = L-citrulline + phosphate + H(+). It participates in amino-acid biosynthesis; L-arginine biosynthesis; L-arginine from L-ornithine and carbamoyl phosphate: step 1/3. Functionally, reversibly catalyzes the transfer of the carbamoyl group from carbamoyl phosphate (CP) to the N(epsilon) atom of ornithine (ORN) to produce L-citrulline. This is Ornithine carbamoyltransferase from Methylobacillus flagellatus (strain ATCC 51484 / DSM 6875 / VKM B-1610 / KT).